The chain runs to 147 residues: Large ribosomal subunit protein bL9 (147 aa).

This sequence belongs to the bacterial ribosomal protein bL9 family.

In terms of biological role, binds to the 23S rRNA. The polypeptide is Large ribosomal subunit protein bL9 (Geobacter sp. (strain M21)).